The following is a 335-amino-acid chain: Mitochondrial amidoxime reducing component 2 (335 aa).

A mitochondrion-targeting transit peptide spans 1-35 (MGASSSSALARLGLPAQARPRWLGVAVLGLAAVAL). Residues K59, K138, and K144 each participate in a glycyl lysine isopeptide (Lys-Gly) (interchain with G-Cter in ubiquitin) cross-link. K156 is subject to N6-acetyllysine; alternate. K156 is covalently cross-linked (Glycyl lysine isopeptide (Lys-Gly) (interchain with G-Cter in ubiquitin); alternate). Residues K173, K187, K287, and K294 each participate in a glycyl lysine isopeptide (Lys-Gly) (interchain with G-Cter in ubiquitin) cross-link. Residues 188 to 334 (GRTSRKLLPT…LRVGDPVYRM (147 aa)) form the MOSC domain.

As to quaternary structure, component of a complex composed of cytochrome b5, NADH-cytochrome b5 reductase (CYB5R3) and MTARC2. The cofactor is Mo-molybdopterin. In terms of processing, ubiquitinated by PRKN during mitophagy, leading to its degradation and enhancement of mitophagy. Deubiquitinated by USP30.

The protein resides in the mitochondrion outer membrane. It is found in the peroxisome. The catalysed reaction is N(omega)-hydroxy-L-arginine + 2 Fe(II)-[cytochrome b5] + 2 H(+) = L-arginine + 2 Fe(III)-[cytochrome b5] + H2O. Catalyzes the reduction of N-oxygenated molecules, acting as a counterpart of cytochrome P450 and flavin-containing monooxygenases in metabolic cycles. As a component of prodrug-converting system, reduces a multitude of N-hydroxylated prodrugs particularly amidoximes, leading to increased drug bioavailability. May be involved in mitochondrial N(omega)-hydroxy-L-arginine (NOHA) reduction, regulating endogenous nitric oxide levels and biosynthesis. Postulated to cleave the N-OH bond of N-hydroxylated substrates in concert with electron transfer from NADH to cytochrome b5 reductase then to cytochrome b5, the ultimate electron donor that primes the active site for substrate reduction. In Macaca fascicularis (Crab-eating macaque), this protein is Mitochondrial amidoxime reducing component 2 (MTARC2).